Here is a 620-residue protein sequence, read N- to C-terminus: Ion-translocating oxidoreductase complex subunit C (620 aa).

4Fe-4S ferredoxin-type domains lie at 366 to 397 (TEMG…QQLY) and 407 to 436 (KARN…VQYY). [4Fe-4S] cluster-binding residues include C377, C380, C383, C387, C416, C419, C422, and C426.

This sequence belongs to the 4Fe4S bacterial-type ferredoxin family. RnfC subfamily. As to quaternary structure, the complex is composed of six subunits: RnfA, RnfB, RnfC, RnfD, RnfE and RnfG. It depends on [4Fe-4S] cluster as a cofactor.

The protein resides in the cell inner membrane. Functionally, part of a membrane-bound complex that couples electron transfer with translocation of ions across the membrane. The chain is Ion-translocating oxidoreductase complex subunit C from Yersinia pestis bv. Antiqua (strain Antiqua).